Consider the following 91-residue polypeptide: Small ribosomal subunit protein uS19 (91 aa).

It belongs to the universal ribosomal protein uS19 family.

Its function is as follows. Protein S19 forms a complex with S13 that binds strongly to the 16S ribosomal RNA. The chain is Small ribosomal subunit protein uS19 from Ralstonia pickettii (strain 12J).